A 189-amino-acid chain; its full sequence is Thermostable direct hemolysin 1 (189 aa).

Positions 1 to 24 (MKHQYFAKKSFLFISMLAAFKTSA) are cleaved as a signal peptide. Cysteines 175 and 185 form a disulfide.

Belongs to the TDH hemolysin family. In terms of assembly, homodimer.

Functionally, bacterial hemolysins are exotoxins that attack blood cell membranes and cause cell rupture by mechanisms not clearly defined. The polypeptide is Thermostable direct hemolysin 1 (tdh1) (Vibrio parahaemolyticus serotype O3:K6 (strain RIMD 2210633)).